We begin with the raw amino-acid sequence, 314 residues long: Olfactory receptor 1E16 (314 aa).

Over M1–A29 the chain is Extracellular. A glycan (N-linked (GlcNAc...) asparagine) is linked at N5. A helical transmembrane segment spans residues L30–I50. Residues L51–T57 lie on the Cytoplasmic side of the membrane. A helical transmembrane segment spans residues P58 to M78. Residues P79–C97 are Extracellular-facing. C97 and C179 are oxidised to a cystine. Residues L98–M118 traverse the membrane as a helical segment. The Cytoplasmic portion of the chain corresponds to A119 to S143. A helical transmembrane segment spans residues L144–A164. The Extracellular portion of the chain corresponds to R165–E196. A helical membrane pass occupies residues V197–S217. Residues Y218–S239 lie on the Cytoplasmic side of the membrane. Residues T240 to L260 form a helical membrane-spanning segment. Topologically, residues S261–D271 are extracellular. Residues N265 and N266 are each glycosylated (N-linked (GlcNAc...) asparagine). Residues T272–L292 form a helical membrane-spanning segment. Residues R293 to L314 lie on the Cytoplasmic side of the membrane.

It belongs to the G-protein coupled receptor 1 family. As to expression, olfactory epithelium.

It localises to the cell membrane. In terms of biological role, odorant receptor. Activated by a lily-derived aldehyde as well as other odorants. May signal through an inositol 1,4,5-trisphosphate (IP3) second messenger system. This chain is Olfactory receptor 1E16, found in Mus musculus (Mouse).